The sequence spans 536 residues: Protein scd2/ral3 (536 aa).

The 63-residue stretch at P24–K86 folds into the SH3 1 domain. Residues V88–S115 are disordered. A compositionally biased stretch (low complexity) spans S101–S115. Positions S123–L185 constitute an SH3 2 domain. The PX domain maps to S293–V413. Positions T459–R533 constitute a PB1 domain.

As to quaternary structure, scd1, scd2, cdc42, and ras1, in its GTP-bound state, act cooperatively to form a protein complex.

Its function is as follows. Required for mating and morphogenesis. Interacts directly with scd1 and with cdc42. May bridge and facilitate scd1 and cdc42 interactions. The sequence is that of Protein scd2/ral3 (scd2) from Schizosaccharomyces pombe (strain 972 / ATCC 24843) (Fission yeast).